A 195-amino-acid polypeptide reads, in one-letter code: 5'-deoxynucleotidase SO_2484 (195 aa).

Substrate contacts are provided by residues 16–17 (RW) and His31. Residues 28-140 (VQEHSLQVAM…VKSADTLCAY (113 aa)) enclose the HD domain. Residues His31, His66, and Asp67 each contribute to the a divalent metal cation site. Residues Asp67, 75–78 (DLPT), and Asp135 each bind substrate. Asp135 is an a divalent metal cation binding site.

It belongs to the 5DNU family. Homodimer. Requires a divalent metal cation as cofactor.

Its subcellular location is the cytoplasm. It catalyses the reaction a 2'-deoxyribonucleoside 5'-phosphate + H2O = a 2'-deoxyribonucleoside + phosphate. Its function is as follows. Catalyzes the strictly specific dephosphorylation of 2'-deoxyribonucleoside 5'-monophosphates. In Shewanella oneidensis (strain ATCC 700550 / JCM 31522 / CIP 106686 / LMG 19005 / NCIMB 14063 / MR-1), this protein is 5'-deoxynucleotidase SO_2484.